We begin with the raw amino-acid sequence, 118 residues long: V-type proton ATPase subunit G 1 (118 aa).

Ala2 carries the N-acetylalanine modification. A disordered region spans residues 25 to 90; it reads ARKRKARRLK…VQGMQSSQQR (66 aa). Over residues 35-56 the composition is skewed to basic and acidic residues; that stretch reads QAKEEAQMEVEQYRREREHEFQ. Composition is skewed to polar residues over residues 57–69 and 78–89; these read SKQQ…QGNL and RHQVQGMQSSQQ.

The protein belongs to the V-ATPase G subunit family. V-ATPase is a heteromultimeric enzyme made up of two complexes: the ATP-hydrolytic V1 complex and the proton translocation V0 complex. The V1 complex consists of three catalytic AB heterodimers that form a heterohexamer, three peripheral stalks each consisting of EG heterodimers, one central rotor including subunits D and F, and the regulatory subunits C and H. The proton translocation complex V0 consists of the proton transport subunit a, a ring of proteolipid subunits c9c'', rotary subunit d, subunits e and f, and the accessory subunits ATP6AP1/Ac45 and ATP6AP2/PRR.

It is found in the apical cell membrane. In terms of biological role, subunit of the V1 complex of vacuolar(H+)-ATPase (V-ATPase), a multisubunit enzyme composed of a peripheral complex (V1) that hydrolyzes ATP and a membrane integral complex (V0) that translocates protons. V-ATPase is responsible for acidifying and maintaining the pH of intracellular compartments and in some cell types, is targeted to the plasma membrane, where it is responsible for acidifying the extracellular environment. In aerobic conditions, involved in intracellular iron homeostasis, thus triggering the activity of Fe(2+) prolyl hydroxylase (PHD) enzymes, and leading to HIF1A hydroxylation and subsequent proteasomal degradation. The chain is V-type proton ATPase subunit G 1 (ATP6V1G1) from Pan troglodytes (Chimpanzee).